The following is a 582-amino-acid chain: Zinc finger protein somi-1 (582 aa).

2 disordered regions span residues L179–D251 and S352–Q377. The span at T188–N226 shows a compositional bias: polar residues. Over residues S227 to G244 the composition is skewed to low complexity. The span at S352–S368 shows a compositional bias: basic and acidic residues. The segment at Y454–H477 adopts a C2H2-type; Degenerate zinc-finger fold. The interval A513–L582 is disordered. The segment covering L551 to N570 has biased composition (low complexity). Over residues Q572–L582 the composition is skewed to pro residues.

As to quaternary structure, may interact with swsn-9; the interaction promotes hypodermal differentiation. In terms of tissue distribution, expressed in hypodermal seam cells, the somatic gonad and vulval precursor cells, body wall muscle and head neurons.

The protein localises to the nucleus. In terms of biological role, DNA-binding protein which binds to the promoters of let-60, lin-14 and lin-28, possibly to regulate genes involved in hypodermal and vulval development. Together with miRNAs mir-84 and let-7 may direct terminal differentiation of the seam cells, exit from the molting cycle, and vulva formation. Does not regulate the expression of mir-84. May promote hypodermal differentiation in association with swsn-9, a component of SWI/SNF chromatin remodeling complexes. The polypeptide is Zinc finger protein somi-1 (Caenorhabditis elegans).